A 274-amino-acid chain; its full sequence is Serine/threonine-protein kinase 1 (274 aa).

Positions 16 to 273 constitute a Protein kinase domain; it reads AVLAPKVVNG…HSFLASRHDY (258 aa). ATP-binding positions include 22–30 and lysine 46; that span reads VVNGRFGKM. Aspartate 134 serves as the catalytic Proton acceptor.

It belongs to the protein kinase superfamily. Ser/Thr protein kinase family.

The catalysed reaction is L-seryl-[protein] + ATP = O-phospho-L-seryl-[protein] + ADP + H(+). The enzyme catalyses L-threonyl-[protein] + ATP = O-phospho-L-threonyl-[protein] + ADP + H(+). The sequence is that of Serine/threonine-protein kinase 1 (PK1) from Orgyia pseudotsugata multicapsid polyhedrosis virus (OpMNPV).